Consider the following 274-residue polypeptide: Rhamnulose-1-phosphate aldolase (274 aa).

Residue Glu-117 is part of the active site. Positions 141, 143, and 212 each coordinate Zn(2+).

Belongs to the aldolase class II family. RhaD subfamily. Homotetramer. Zn(2+) serves as cofactor.

The protein localises to the cytoplasm. It catalyses the reaction L-rhamnulose 1-phosphate = (S)-lactaldehyde + dihydroxyacetone phosphate. It participates in carbohydrate degradation; L-rhamnose degradation; glycerone phosphate from L-rhamnose: step 3/3. Catalyzes the reversible cleavage of L-rhamnulose-1-phosphate to dihydroxyacetone phosphate (DHAP) and L-lactaldehyde. This chain is Rhamnulose-1-phosphate aldolase, found in Yersinia pestis.